The primary structure comprises 136 residues: Large ribosomal subunit protein eL27A (136 aa).

It belongs to the eukaryotic ribosomal protein eL27 family. In terms of assembly, component of the large ribosomal subunit (LSU). Mature yeast ribosomes consist of a small (40S) and a large (60S) subunit. The 40S small subunit contains 1 molecule of ribosomal RNA (18S rRNA) and at least 33 different proteins. The large 60S subunit contains 3 rRNA molecules (25S, 5.8S and 5S rRNA) and at least 46 different proteins.

The protein resides in the cytoplasm. Its subcellular location is the nucleus. Functionally, component of the ribosome, a large ribonucleoprotein complex responsible for the synthesis of proteins in the cell. The small ribosomal subunit (SSU) binds messenger RNAs (mRNAs) and translates the encoded message by selecting cognate aminoacyl-transfer RNA (tRNA) molecules. The large subunit (LSU) contains the ribosomal catalytic site termed the peptidyl transferase center (PTC), which catalyzes the formation of peptide bonds, thereby polymerizing the amino acids delivered by tRNAs into a polypeptide chain. The nascent polypeptides leave the ribosome through a tunnel in the LSU and interact with protein factors that function in enzymatic processing, targeting, and the membrane insertion of nascent chains at the exit of the ribosomal tunnel. The chain is Large ribosomal subunit protein eL27A (rpl2701) from Schizosaccharomyces pombe (strain 972 / ATCC 24843) (Fission yeast).